A 310-amino-acid chain; its full sequence is Oxygen-dependent coproporphyrinogen-III oxidase (310 aa).

Ser-97 lines the substrate pocket. Residues His-101 and His-111 each contribute to the a divalent metal cation site. Catalysis depends on His-111, which acts as the Proton donor. Residue 113-115 participates in substrate binding; it reads NFR. Residues His-150 and His-180 each coordinate a divalent metal cation. Residues 245–280 form an important for dimerization region; sequence YVEFNLLYDRGTRFGLEFGGRTESILMSLPPRVVWR. 263–265 serves as a coordination point for substrate; sequence GGR.

Belongs to the aerobic coproporphyrinogen-III oxidase family. Homodimer. The cofactor is a divalent metal cation.

It is found in the cytoplasm. The enzyme catalyses coproporphyrinogen III + O2 + 2 H(+) = protoporphyrinogen IX + 2 CO2 + 2 H2O. It functions in the pathway porphyrin-containing compound metabolism; protoporphyrin-IX biosynthesis; protoporphyrinogen-IX from coproporphyrinogen-III (O2 route): step 1/1. Its function is as follows. Involved in the heme biosynthesis. Catalyzes the aerobic oxidative decarboxylation of propionate groups of rings A and B of coproporphyrinogen-III to yield the vinyl groups in protoporphyrinogen-IX. The protein is Oxygen-dependent coproporphyrinogen-III oxidase of Coxiella burnetii (strain RSA 331 / Henzerling II).